A 467-amino-acid polypeptide reads, in one-letter code: MSERTLFDKVWDAHTVRILPSGQTQLFIGLHLIHEVTSPQAFAMLRERHLPVLFPERTVATVDHIIPTDNRARPFADPLAEEMIQELERNCRQYGIRFYNSGSGRQGIVHVIAPEQGLTLPGMTIACGDSHTSTHGAFGAIAFGIGTSQVRDVLATQTLALSKLKVRRIEIHGKLGPGVYAKDVILHIIRKLGVKGGVGYAYEYGGSAIEAMSMEERMTLCNMSIEGGARCGYVNPDAVTFEYLRGREFAPQGSDWEEAVAWWKSLASDGNARYDDVVVFQAADIAPTVTWGITPGQGIGVDERIPAPEDLPESERELAKEAYAYMDLQPGDPIVGTPVDVCFIGSCTNGRLSDLREAAKIAKGRRVAPGVKAFVVPGSERVKQEAEQEGLREIFEAAGFEWRDPGCSMCLAMNPDRLVGRQISASSSNRNFKGRQGSPSGRTLLMSPAMVAAAAVSGKVVDVRTLL.

[4Fe-4S] cluster is bound by residues Cys-347, Cys-407, and Cys-410.

It belongs to the aconitase/IPM isomerase family. LeuC type 1 subfamily. In terms of assembly, heterodimer of LeuC and LeuD. Requires [4Fe-4S] cluster as cofactor.

It carries out the reaction (2R,3S)-3-isopropylmalate = (2S)-2-isopropylmalate. It participates in amino-acid biosynthesis; L-leucine biosynthesis; L-leucine from 3-methyl-2-oxobutanoate: step 2/4. Functionally, catalyzes the isomerization between 2-isopropylmalate and 3-isopropylmalate, via the formation of 2-isopropylmaleate. This chain is 3-isopropylmalate dehydratase large subunit, found in Synechococcus sp. (strain JA-2-3B'a(2-13)) (Cyanobacteria bacterium Yellowstone B-Prime).